The primary structure comprises 227 residues: Phosphoribosylformylglycinamidine synthase subunit PurQ (227 aa).

Positions phenylalanine 3–valine 225 constitute a Glutamine amidotransferase type-1 domain. Residue cysteine 86 is the Nucleophile of the active site. Residues histidine 194 and glutamate 196 contribute to the active site.

In terms of assembly, part of the FGAM synthase complex composed of 1 PurL, 1 PurQ and 2 PurS subunits.

It localises to the cytoplasm. It catalyses the reaction N(2)-formyl-N(1)-(5-phospho-beta-D-ribosyl)glycinamide + L-glutamine + ATP + H2O = 2-formamido-N(1)-(5-O-phospho-beta-D-ribosyl)acetamidine + L-glutamate + ADP + phosphate + H(+). The catalysed reaction is L-glutamine + H2O = L-glutamate + NH4(+). It functions in the pathway purine metabolism; IMP biosynthesis via de novo pathway; 5-amino-1-(5-phospho-D-ribosyl)imidazole from N(2)-formyl-N(1)-(5-phospho-D-ribosyl)glycinamide: step 1/2. Part of the phosphoribosylformylglycinamidine synthase complex involved in the purines biosynthetic pathway. Catalyzes the ATP-dependent conversion of formylglycinamide ribonucleotide (FGAR) and glutamine to yield formylglycinamidine ribonucleotide (FGAM) and glutamate. The FGAM synthase complex is composed of three subunits. PurQ produces an ammonia molecule by converting glutamine to glutamate. PurL transfers the ammonia molecule to FGAR to form FGAM in an ATP-dependent manner. PurS interacts with PurQ and PurL and is thought to assist in the transfer of the ammonia molecule from PurQ to PurL. This chain is Phosphoribosylformylglycinamidine synthase subunit PurQ, found in Bacillus anthracis (strain A0248).